We begin with the raw amino-acid sequence, 129 residues long: Small ribosomal subunit protein eS6 (129 aa).

The segment at 53–88 (TGGSDTSGRPMRPDVRGVTTKEIMSDGGVGFEPTTD) is disordered.

Belongs to the eukaryotic ribosomal protein eS6 family.

This chain is Small ribosomal subunit protein eS6 (rps6e), found in Haloarcula marismortui (strain ATCC 43049 / DSM 3752 / JCM 8966 / VKM B-1809) (Halobacterium marismortui).